The primary structure comprises 722 residues: Ataxin-7-like protein 2 (722 aa).

4 disordered regions span residues 106–228 (LSKL…PPKT), 288–317 (NSRKGESPKEKSPGRKEQVLERPSQELPSS), 347–403 (SRAS…DCHY), and 531–600 (AITS…GCRG). The segment covering 181–191 (GKPPMAPPSKE) has biased composition (pro residues). The region spanning 230 to 297 (RKMARKECDL…NSRKGESPKE (68 aa)) is the SCA7 domain. A compositionally biased stretch (basic and acidic residues) spans 290 to 311 (RKGESPKEKSPGRKEQVLERPS). Low complexity predominate over residues 541–556 (PSPSFSKLPPSKASKS). Residues 558-569 (KGKDGVEVEAPS) show a composition bias toward basic and acidic residues. Position 575 is a phosphoserine (Ser575).

The chain is Ataxin-7-like protein 2 (ATXN7L2) from Homo sapiens (Human).